A 299-amino-acid polypeptide reads, in one-letter code: Peroxisomal biogenesis factor 19 (299 aa).

A disordered region spans residues 1-63; sequence MAAAEEGCDA…SPGDTAKDAL (63 aa). Alanine 2 carries the N-acetylalanine modification. Positions 2–56 are docking to the peroxisome membrane and binding to PEX3; the sequence is AAAEEGCDAGVEADRELEELLESALDDFDKAKPSPAPPPTTSAPDASGPQKKSPG. A necessary for PEX19 function on peroxisome biogenesis region spans residues 2 to 91; it reads AAAEEGCDAG…QATAEFEKAM (90 aa). A compositionally biased stretch (acidic residues) spans 16-27; the sequence is RELEELLESALD. A phosphoserine mark is found at serine 35, serine 54, and serine 66. A Phosphothreonine modification is found at threonine 236. Cysteine 296 carries the post-translational modification Cysteine methyl ester. Cysteine 296 carries the S-farnesyl cysteine lipid modification. Residues 297–299 constitute a propeptide, removed in mature form; that stretch reads LIM.

Belongs to the peroxin-19 family. Interacts with a broad range of peroxisomal membrane proteins, including PEX3, PEX10, PEX11A, PEX11B, PEX12, PEX13, PEX14 and PEX16, PXMP2/PMP22, PXMP4/PMP24, SLC25A17/PMP34, ABCD1/ALDP, ABCD2/ALDRP, and ABCD3/PMP70. Also interacts with the tumor suppressor CDKN2A/p19ARF. As to expression, ubiquitous.

The protein resides in the cytoplasm. The protein localises to the peroxisome membrane. Necessary for early peroxisomal biogenesis. Acts both as a cytosolic chaperone and as an import receptor for peroxisomal membrane proteins (PMPs). Binds and stabilizes newly synthesized PMPs in the cytoplasm by interacting with their hydrophobic membrane-spanning domains, and targets them to the peroxisome membrane by binding to the integral membrane protein PEX3. Excludes CDKN2A from the nucleus and prevents its interaction with MDM2, which results in active degradation of TP53. This is Peroxisomal biogenesis factor 19 (PEX19) from Cricetulus griseus (Chinese hamster).